The primary structure comprises 323 residues: MDPTISSLSTESTTLNKTGHPSCRPILTLSFLVPIITLLGLAGNTIVLWLLGFRMRRKAISVYVLNLSLADSFFLCCHFIDSLMRIMNFYGIYAHKLSKEILGNAAIIPYISGLSILSAISTERCLSVLWPIWYHCHRPRNMSAIICVLIWVLSFLMGILDWFFSGFLGETHHHLWKNVDFIVTAFLIFLFMLLFGSSLALLVRILCGSRRKPLSRLYVTISLTVMVYLICGLPLGLYLFLLYWFGIHLHYPFCHIYQVTVLLSCVNSSANPIIYFLVGSFRHRKKHRSLKMVLKRALEETPEEDEYTDSHVQKPTEISERRC.

Over Met1–Ser30 the chain is Extracellular. An N-linked (GlcNAc...) asparagine glycan is attached at Asn16. A helical transmembrane segment spans residues Phe31–Leu51. The Cytoplasmic portion of the chain corresponds to Gly52–Ala59. Residues Ile60 to Ile80 form a helical membrane-spanning segment. The Extracellular portion of the chain corresponds to Asp81–Glu100. Residues Ile101–Ser121 traverse the membrane as a helical segment. Residues Thr122–Ser143 lie on the Cytoplasmic side of the membrane. Residues Ala144 to Phe164 form a helical membrane-spanning segment. Residues Ser165–Asp180 are Extracellular-facing. Residues Phe181–Leu201 form a helical membrane-spanning segment. Over Leu202 to Met226 the chain is Cytoplasmic. The helical transmembrane segment at Val227–Ile247 threads the bilayer. Residues His248–Gln258 are Extracellular-facing. The helical transmembrane segment at Val259 to Gly279 threads the bilayer. The Cytoplasmic portion of the chain corresponds to Ser280–Cys323.

It belongs to the G-protein coupled receptor 1 family. Mas subfamily. As to expression, uniquely localized in a subset of small dorsal root and trigeminal sensory neurons. Associated preferentially with IB4 class of small-diameter somatosensory afferents (also known as nociceptors).

It localises to the cell membrane. In terms of biological role, orphan receptor activated by neuropeptides terminating in Arg-Phe or Arg-Phe-amide. Mediates its action by association with G proteins that activate a phosphatidylinositol-calcium second messenger system. Its effect is mediated by G(q) and G(11) proteins. May regulate the function of nociceptive neurons by modulation of pain perception. This is Mas-related G-protein coupled receptor member X1 (Mrgprx1) from Rattus norvegicus (Rat).